A 321-amino-acid chain; its full sequence is Beta-ketoacyl-[acyl-carrier-protein] synthase III (321 aa).

Residues Cys114 and His248 contribute to the active site. Positions 249–253 (QANIR) are ACP-binding. The active site involves Asn278.

The protein belongs to the thiolase-like superfamily. FabH family. Homodimer.

Its subcellular location is the cytoplasm. It catalyses the reaction malonyl-[ACP] + acetyl-CoA + H(+) = 3-oxobutanoyl-[ACP] + CO2 + CoA. It participates in lipid metabolism; fatty acid biosynthesis. In terms of biological role, catalyzes the condensation reaction of fatty acid synthesis by the addition to an acyl acceptor of two carbons from malonyl-ACP. Catalyzes the first condensation reaction which initiates fatty acid synthesis and may therefore play a role in governing the total rate of fatty acid production. Possesses both acetoacetyl-ACP synthase and acetyl transacylase activities. Its substrate specificity determines the biosynthesis of branched-chain and/or straight-chain of fatty acids. The chain is Beta-ketoacyl-[acyl-carrier-protein] synthase III from Methylococcus capsulatus (strain ATCC 33009 / NCIMB 11132 / Bath).